A 213-amino-acid polypeptide reads, in one-letter code: Orotate phosphoribosyltransferase (213 aa).

Residue Lys-26 participates in 5-phospho-alpha-D-ribose 1-diphosphate binding. Orotate is bound at residue 34-35; that stretch reads FF. Residues 72 to 73, Arg-99, Lys-100, Lys-103, His-105, and 124 to 132 each bind 5-phospho-alpha-D-ribose 1-diphosphate; these read YK and DDVITAGTA. 2 residues coordinate orotate: Thr-128 and Arg-156.

Belongs to the purine/pyrimidine phosphoribosyltransferase family. PyrE subfamily. As to quaternary structure, homodimer. The cofactor is Mg(2+).

It carries out the reaction orotidine 5'-phosphate + diphosphate = orotate + 5-phospho-alpha-D-ribose 1-diphosphate. It functions in the pathway pyrimidine metabolism; UMP biosynthesis via de novo pathway; UMP from orotate: step 1/2. In terms of biological role, catalyzes the transfer of a ribosyl phosphate group from 5-phosphoribose 1-diphosphate to orotate, leading to the formation of orotidine monophosphate (OMP). This Thioalkalivibrio sulfidiphilus (strain HL-EbGR7) protein is Orotate phosphoribosyltransferase.